The sequence spans 441 residues: Tubulin beta chain (441 aa).

GTP is bound by residues glutamine 11, glutamate 69, serine 138, glycine 142, threonine 143, glycine 144, asparagine 204, and asparagine 226. A Mg(2+)-binding site is contributed by glutamate 69.

The protein belongs to the tubulin family. As to quaternary structure, dimer of alpha and beta chains. A typical microtubule is a hollow water-filled tube with an outer diameter of 25 nm and an inner diameter of 15 nM. Alpha-beta heterodimers associate head-to-tail to form protofilaments running lengthwise along the microtubule wall with the beta-tubulin subunit facing the microtubule plus end conferring a structural polarity. Microtubules usually have 13 protofilaments but different protofilament numbers can be found in some organisms and specialized cells. Requires Mg(2+) as cofactor.

Its subcellular location is the cytoplasm. It is found in the cytoskeleton. Its function is as follows. Tubulin is the major constituent of microtubules, a cylinder consisting of laterally associated linear protofilaments composed of alpha- and beta-tubulin heterodimers. Microtubules grow by the addition of GTP-tubulin dimers to the microtubule end, where a stabilizing cap forms. Below the cap, tubulin dimers are in GDP-bound state, owing to GTPase activity of alpha-tubulin. The polypeptide is Tubulin beta chain (Babesia bovis).